A 601-amino-acid polypeptide reads, in one-letter code: Glutamyl-tRNA(Gln) amidotransferase subunit B, mitochondrial (601 aa).

The N-terminal 55 residues, 1–55 (MLRPWLRQCPRATRSLACPQCHLPRPQTARRALRPLPALSLSHPIRSLQTTTTES), are a transit peptide targeting the mitochondrion.

The protein belongs to the GatB/GatE family. GatB subfamily. Subunit of the heterotrimeric GatCAB amidotransferase (AdT) complex, composed of A, B and C subunits.

The protein resides in the mitochondrion. It carries out the reaction L-glutamyl-tRNA(Gln) + L-glutamine + ATP + H2O = L-glutaminyl-tRNA(Gln) + L-glutamate + ADP + phosphate + H(+). Functionally, allows the formation of correctly charged Gln-tRNA(Gln) through the transamidation of misacylated Glu-tRNA(Gln) in the mitochondria. The reaction takes place in the presence of glutamine and ATP through an activated gamma-phospho-Glu-tRNA(Gln). This chain is Glutamyl-tRNA(Gln) amidotransferase subunit B, mitochondrial, found in Aspergillus niger (strain ATCC MYA-4892 / CBS 513.88 / FGSC A1513).